The chain runs to 160 residues: Protein cornichon homolog 3 (160 aa).

Residues 1-10 (MAFTFAAFCY) are Cytoplasmic-facing. The helical transmembrane segment at 11–31 (MLSLVLCAALIFFAIWHIIAF) threads the bilayer. Residues 32–72 (DELRTDFKSPIDQCNPVHARERLRNIERICFLLRKLVLPEY) lie on the Lumenal side of the membrane. A helical transmembrane segment spans residues 73 to 93 (SIHSLFCIMFLCAQEWLTLGL). The Cytoplasmic portion of the chain corresponds to 94-138 (NVPLLFYHFWRYFHCPADSSELAYDPPVVMNADTLSYCQKEAWCK). The chain crosses the membrane as a helical span at residues 139-159 (LAFYLLSFFYYLYCMIYTLVS). S160 is a topological domain (lumenal).

The protein belongs to the cornichon family. In terms of assembly, acts as an auxiliary subunit for AMPA-selective glutamate receptors (AMPARs). Found in a complex with GRIA1, GRIA2, GRIA3, GRIA4, CNIH2, CACNG2, CACNG3, CACNG4, CACNG5, CACNG7 and CACNG8. Expression is up-regulated in dorsolateral prefrontal cortex of patients with schizophrenia (postmortem brain study).

It is found in the postsynaptic cell membrane. Its function is as follows. Regulates the trafficking and gating properties of AMPA-selective glutamate receptors (AMPARs). Promotes their targeting to the cell membrane and synapses and modulates their gating properties by regulating their rates of activation, deactivation and desensitization. The sequence is that of Protein cornichon homolog 3 (CNIH3) from Homo sapiens (Human).